The chain runs to 470 residues: Argininosuccinate lyase (470 aa).

It belongs to the lyase 1 family. Argininosuccinate lyase subfamily.

The protein localises to the cytoplasm. The catalysed reaction is 2-(N(omega)-L-arginino)succinate = fumarate + L-arginine. Its pathway is amino-acid biosynthesis; L-arginine biosynthesis; L-arginine from L-ornithine and carbamoyl phosphate: step 3/3. The sequence is that of Argininosuccinate lyase from Mycolicibacterium gilvum (strain PYR-GCK) (Mycobacterium gilvum (strain PYR-GCK)).